Reading from the N-terminus, the 304-residue chain is Acetyl-coenzyme A carboxylase carboxyl transferase subunit beta (304 aa).

The 270-residue stretch at 25 to 294 (VWTKCDSCGQ…PSVVESKADT (270 aa)) folds into the CoA carboxyltransferase N-terminal domain. The Zn(2+) site is built by cysteine 29, cysteine 32, cysteine 48, and cysteine 51. The C4-type zinc-finger motif lies at 29–51 (CDSCGQVLYRAELERNLEVCPKC).

It belongs to the AccD/PCCB family. As to quaternary structure, acetyl-CoA carboxylase is a heterohexamer composed of biotin carboxyl carrier protein (AccB), biotin carboxylase (AccC) and two subunits each of ACCase subunit alpha (AccA) and ACCase subunit beta (AccD). The cofactor is Zn(2+).

Its subcellular location is the cytoplasm. The enzyme catalyses N(6)-carboxybiotinyl-L-lysyl-[protein] + acetyl-CoA = N(6)-biotinyl-L-lysyl-[protein] + malonyl-CoA. Its pathway is lipid metabolism; malonyl-CoA biosynthesis; malonyl-CoA from acetyl-CoA: step 1/1. In terms of biological role, component of the acetyl coenzyme A carboxylase (ACC) complex. Biotin carboxylase (BC) catalyzes the carboxylation of biotin on its carrier protein (BCCP) and then the CO(2) group is transferred by the transcarboxylase to acetyl-CoA to form malonyl-CoA. The sequence is that of Acetyl-coenzyme A carboxylase carboxyl transferase subunit beta from Yersinia pseudotuberculosis serotype O:1b (strain IP 31758).